We begin with the raw amino-acid sequence, 772 residues long: Chondroitin sulfate glucuronyltransferase (772 aa).

The Cytoplasmic segment spans residues 1 to 6; sequence MRLSSL. A helical; Signal-anchor for type II membrane protein membrane pass occupies residues 7–29; that stretch reads LALLRPALPLILGLSLGCSLSLL. The Lumenal segment spans residues 30 to 772; that stretch reads RVSWIQGEGE…LFEQEQANST (743 aa). Asparagine 121 and asparagine 342 each carry an N-linked (GlcNAc...) asparagine glycan. Residues 629-662 are disordered; sequence ALSPQRSPPGPPGAGPDPPSPPGADPSRGAPIGG. The segment covering 634–652 has biased composition (pro residues); sequence RSPPGPPGAGPDPPSPPGA.

Belongs to the chondroitin N-acetylgalactosaminyltransferase family. In terms of tissue distribution, ubiquitous. Highly expressed in placenta, small intestine and pancreas.

It localises to the golgi apparatus. The protein resides in the golgi stack membrane. It catalyses the reaction 3-O-(beta-D-GalNAc-(1-&gt;4)-beta-D-GlcA-(1-&gt;3)-beta-D-Gal-(1-&gt;3)-beta-D-Gal-(1-&gt;4)-beta-D-Xyl)-L-seryl-[protein] + UDP-alpha-D-glucuronate = 3-O-(beta-D-GlcA-(1-&gt;3)-beta-D-GalNAc-(1-&gt;4)-beta-D-GlcA-(1-&gt;3)-beta-D-Gal-(1-&gt;3)-beta-D-Gal-(1-&gt;4)-beta-D-Xyl)-L-seryl-[protein] + UDP + H(+). The catalysed reaction is 3-O-{[beta-D-GalNAc-(1-&gt;4)-beta-D-GlcA-(1-&gt;3)](n)-beta-D-GalNAc-(1-&gt;4)-beta-D-GlcA-(1-&gt;3)-beta-D-Gal-(1-&gt;3)-beta-D-Gal-(1-&gt;4)-beta-D-Xyl}-L-seryl-[protein] + UDP-alpha-D-glucuronate = 3-O-{beta-D-GlcA-(1-&gt;3)-[beta-D-GalNAc-(1-&gt;4)-beta-D-GlcA-(1-&gt;3)](n)-beta-D-GalNAc-(1-&gt;4)-beta-D-GlcA-(1-&gt;3)-beta-D-Gal-(1-&gt;3)-beta-D-Gal-(1-&gt;4)-beta-D-Xyl}-L-seryl-[protein] + UDP + H(+). Its function is as follows. Transfers glucuronic acid (GlcUA) from UDP-GlcUA to N-acetylgalactosamine residues on the non-reducing end of the elongating chondroitin polymer. Has no N-acetylgalactosaminyltransferase activity. This chain is Chondroitin sulfate glucuronyltransferase (CHPF2), found in Homo sapiens (Human).